We begin with the raw amino-acid sequence, 114 residues long: Holo-[acyl-carrier-protein] synthase (114 aa).

Mg(2+) is bound by residues D5 and E50.

The protein belongs to the P-Pant transferase superfamily. AcpS family. It depends on Mg(2+) as a cofactor.

The protein localises to the cytoplasm. The enzyme catalyses apo-[ACP] + CoA = holo-[ACP] + adenosine 3',5'-bisphosphate + H(+). Transfers the 4'-phosphopantetheine moiety from coenzyme A to a Ser of acyl-carrier-protein. The sequence is that of Holo-[acyl-carrier-protein] synthase from Campylobacter curvus (strain 525.92).